Here is a 2194-residue protein sequence, read N- to C-terminus: Supervillin (2194 aa).

The interaction with MYLK stretch occupies residues 1-174 (MKRKERIARR…SSYSRTELSG (174 aa)). 8 disordered regions span residues 35–98 (LEED…TQSL), 118–335 (EKYG…QRRH), 388–414 (PESI…KVLE), 450–500 (EDRG…TERM), 513–563 (AVSQ…QTSK), 589–667 (RASR…KVDE), 685–719 (KSFD…QPVT), and 739–791 (HPVM…DSST). Serine 50 carries the phosphoserine modification. The segment covering 87–98 (PYSSGIMDTQSL) has biased composition (polar residues). Composition is skewed to basic and acidic residues over residues 139-161 (SRKD…ESSR) and 181-192 (ESKDYGLHRSDG). Phosphoserine is present on residues serine 245 and serine 262. Composition is skewed to basic and acidic residues over residues 283–294 (PKHEWFLQKDSE) and 308–319 (KVREKLVREESA). Polar residues predominate over residues 320-330 (RSSPELTSESL). 2 positions are modified to phosphoserine: serine 321 and serine 322. Residues 455-467 (GRSQEAPSGTEDL) show a composition bias toward polar residues. Low complexity predominate over residues 540–551 (PPQLQALKAKAP). 2 stretches are compositionally biased toward basic and acidic residues: residues 592–615 (RKPE…ERGS) and 626–635 (ENRKTSERFR). Phosphoserine is present on residues serine 652 and serine 686. Over residues 704–714 (QRLRRLQDRSH) the composition is skewed to basic and acidic residues. A phosphoserine mark is found at serine 747 and serine 781. The span at 770-782 (LARDQTNESKDSA) shows a compositional bias: basic and acidic residues. At tyrosine 829 the chain carries Phosphotyrosine. The residue at position 831 (threonine 831) is a Phosphothreonine. 6 positions are modified to phosphoserine: serine 893, serine 899, serine 903, serine 947, serine 979, and serine 1031. The disordered stretch occupies residues 1036–1077 (EFGEPTSEQTGAAAGKPAAPTATPVSWKPQDPSEQPQEKRYQ). Positions 1045-1059 (TGAAAGKPAAPTATP) are enriched in low complexity. A phosphoserine mark is found at serine 1099 and serine 1205. Residue threonine 1210 is modified to Phosphothreonine. Phosphoserine is present on residues serine 1214, serine 1302, and serine 1385. The segment at 1399-1667 (SNVSLRSVNL…KFLDWTELKR (269 aa)) is interaction with NEB. Gelsolin-like repeat units lie at residues 1421-1520 (KKLM…LGGQ), 1540-1662 (IETN…FLDW), 1732-1842 (ISVD…FQGG), 1861-1962 (WRLY…LGRR), and 1995-2102 (ATEF…FPSW). The 64-residue stretch at 2131 to 2194 (KLCKTIYPLA…VNLKKAKGLF (64 aa)) folds into the HP domain.

It belongs to the villin/gelsolin family. Associates with F-actin. Interacts with NEB. Interacts with MYH9. Interacts with MYLK. Interacts with TASOR. In terms of assembly, interacts with TRIP6 and DYNLT1. Interacts with KIF14; at midbody during cytokinesis.

Its subcellular location is the cell membrane. The protein resides in the cytoplasm. It is found in the cytoskeleton. It localises to the cell projection. The protein localises to the invadopodium. Its subcellular location is the podosome. The protein resides in the midbody. It is found in the cleavage furrow. Functionally, forms a high-affinity link between the actin cytoskeleton and the membrane. Is among the first costameric proteins to assemble during myogenesis and it contributes to myogenic membrane structure and differentiation. Appears to be involved in myosin II assembly. May modulate myosin II regulation through MLCK during cell spreading, an initial step in cell migration. May play a role in invadopodial function. Its function is as follows. May be involved in modulation of focal adhesions. Supervillin-mediated down-regulation of focal adhesions involves binding to TRIP6. Plays a role in cytokinesis through KIF14 interaction. The polypeptide is Supervillin (Bos taurus (Bovine)).